The sequence spans 326 residues: Protein farnesyltransferase/geranylgeranyltransferase type-1 subunit alpha (326 aa).

5 PFTA repeats span residues 55–89 (RSPRALRLTEETLLLNSGNYTVWHFRRLVLEALNH), 90–124 (DLFEELEFIERIAEDNSKNYQLWHHRRWVAEKLGP), 126–160 (VAGRELEFTRRVLSLDAKHYHAWSHRQWTLRALGG), 161–194 (WEDELDYCHELLEADVFNNSAWNQRYYVITQSPL), and 201–235 (MRESEVSYTIKAILTNPANESSWRYLKALYKDDKE).

It belongs to the protein prenyltransferase subunit alpha family. As to quaternary structure, heterodimer of an alpha and a beta subunit. The cofactor is Mg(2+).

The enzyme catalyses L-cysteinyl-[protein] + (2E,6E)-farnesyl diphosphate = S-(2E,6E)-farnesyl-L-cysteinyl-[protein] + diphosphate. It carries out the reaction geranylgeranyl diphosphate + L-cysteinyl-[protein] = S-geranylgeranyl-L-cysteinyl-[protein] + diphosphate. Essential subunit of both the farnesyltransferase and the geranylgeranyltransferase complex. Contributes to the transfer of a farnesyl or geranylgeranyl moiety from farnesyl or geranylgeranyl diphosphate to a cysteine at the fourth position from the C-terminus of several proteins having the C-terminal sequence Cys-aliphatic-aliphatic-X. This Arabidopsis thaliana (Mouse-ear cress) protein is Protein farnesyltransferase/geranylgeranyltransferase type-1 subunit alpha (FTA).